Reading from the N-terminus, the 118-residue chain is Large ribosomal subunit protein bL19 (118 aa).

Belongs to the bacterial ribosomal protein bL19 family.

Functionally, this protein is located at the 30S-50S ribosomal subunit interface and may play a role in the structure and function of the aminoacyl-tRNA binding site. This is Large ribosomal subunit protein bL19 from Campylobacter hominis (strain ATCC BAA-381 / DSM 21671 / CCUG 45161 / LMG 19568 / NCTC 13146 / CH001A).